The following is a 323-amino-acid chain: Probable cell division protein WhiA (323 aa).

Residues 275–309 (TLKELGEMLTTGQVSKSGINHRLRKLDQIAERLRS) constitute a DNA-binding region (H-T-H motif).

This sequence belongs to the WhiA family.

In terms of biological role, involved in cell division and chromosome segregation. In Listeria innocua serovar 6a (strain ATCC BAA-680 / CLIP 11262), this protein is Probable cell division protein WhiA.